Here is a 276-residue protein sequence, read N- to C-terminus: Ribosomal RNA small subunit methyltransferase A (276 aa).

S-adenosyl-L-methionine contacts are provided by Asn-27, Leu-29, Gly-54, Glu-75, Asp-101, and Asn-122.

Belongs to the class I-like SAM-binding methyltransferase superfamily. rRNA adenine N(6)-methyltransferase family. RsmA subfamily.

It is found in the cytoplasm. It carries out the reaction adenosine(1518)/adenosine(1519) in 16S rRNA + 4 S-adenosyl-L-methionine = N(6)-dimethyladenosine(1518)/N(6)-dimethyladenosine(1519) in 16S rRNA + 4 S-adenosyl-L-homocysteine + 4 H(+). Its function is as follows. Specifically dimethylates two adjacent adenosines (A1518 and A1519) in the loop of a conserved hairpin near the 3'-end of 16S rRNA in the 30S particle. May play a critical role in biogenesis of 30S subunits. This Brucella abortus (strain S19) protein is Ribosomal RNA small subunit methyltransferase A.